Consider the following 184-residue polypeptide: Ubiquitin-conjugating enzyme E2-23 kDa (184 aa).

Residues 1–148 form the UBC core domain; it reads MSSPSKRREM…VKEYCERYAK (148 aa). Cys85 (glycyl thioester intermediate) is an active-site residue. A disordered region spans residues 146 to 184; sequence YAKPEDISPEEEEEESDEELSDAEGYDSGDEAIMGHADP. The segment covering 152–175 has biased composition (acidic residues); the sequence is ISPEEEEEESDEELSDAEGYDSGD.

Belongs to the ubiquitin-conjugating enzyme family.

It carries out the reaction S-ubiquitinyl-[E1 ubiquitin-activating enzyme]-L-cysteine + [E2 ubiquitin-conjugating enzyme]-L-cysteine = [E1 ubiquitin-activating enzyme]-L-cysteine + S-ubiquitinyl-[E2 ubiquitin-conjugating enzyme]-L-cysteine.. It participates in protein modification; protein ubiquitination. Functionally, catalyzes the covalent attachment of ubiquitin to other proteins. In Triticum aestivum (Wheat), this protein is Ubiquitin-conjugating enzyme E2-23 kDa (UBC4).